Here is a 436-residue protein sequence, read N- to C-terminus: Cyclic GMP-AMP synthase (436 aa).

112–117 (QGSFQY) provides a ligand contact to GTP. Aspartate 131 and aspartate 133 together coordinate Mg(2+). Residue arginine 182 coordinates ATP. Mg(2+) is bound at residue aspartate 193. Serine 259 is an ATP binding site. Residues lysine 287, serine 301, and aspartate 348 each coordinate GTP. Disordered stretches follow at residues 339 to 358 (RGVE…PSYK) and 417 to 436 (AQEP…MVSG). The span at 419 to 436 (EPSSASKPEKISSTMVSG) shows a compositional bias: polar residues. Glycine 436 participates in a covalent cross-link: Glycyl lysine isopeptide (Gly-Lys) (interchain with K-? in acceptor proteins).

The protein belongs to the CD-NTase family. A01 subfamily. Monomer. Interacts with Cap2 in the presence and absence of phage T2. A Cap2 dimer is bound on either side by a DncV monomer. Requires Mg(2+) as cofactor. In terms of processing, in bacteria expressing capV-cdnD-cap2, this protein is conjugated to a number of other proteins (by Cap2 via this protein's C-terminal Gly residue), many of which are involved in metabolism. More conjugated protein is found in the absence of Cap3.

The enzyme catalyses GTP + ATP = 3',3'-cGAMP + 2 diphosphate. With respect to regulation, primed for activation by Cap2 which conjugates it to cellular proteins; priming is target protein-specific (green fluorescent protein does not activate the enzyme), but which protein(s) activate is unclear. Enzymatic activity of DncV is inhibited by folate-like molecules, such as 5-methyltetrahydrofolate di-glutamate and 5-methyltetrahydrofolate, suggesting the existence of a signaling pathway that links folate-like metabolism cofactors to the regulation of cyclic dinucleotide second messenger synthesis. Lacks a regulatory loop and is constitutively activated. Its function is as follows. Cyclic nucleotide synthase (second messenger synthase) of a CBASS antivirus system. CBASS (cyclic oligonucleotide-based antiphage signaling system) provides immunity against bacteriophages. The CD-NTase protein (DncV, this protein) synthesizes cyclic nucleotides in response to infection; these serve as specific second messenger signals. The signals activate a diverse range of effectors, leading to bacterial cell death and thus abortive phage infection. A type II-A(GA) CBASS system. In terms of biological role, catalyzes the synthesis of 3',3'-cyclic GMP-AMP (cGAMP), a second messenger in cell signal transduction, from GTP and ATP in response to phage infection. Also able to produce c-di-AMP and c-di-GMP from ATP and GTP, respectively; however, cGAMP is the dominant molecule produced by DncV in vivo, contrary to the 2'3'-cGAMP produced by eukaryotes. Is required for efficient V.cholerae intestinal colonization, and down-regulates the colonization-influencing process of chemotaxis. Is not active with dATP, TTP, UTP or CTP. Its product controls the activity of cGAMP-activated phospholipase CapV, a patatin-like lipase that is a direct cGAMP receptor encoded in the dncV operon. Protects E.coli against phage infection. When the CBASS operon (capV-dncV-cap2-cap3) is introduced in E.coli MG1655 there is about 100-fold protection against phages P1 and T2. When the operon is introduced in E.coli MG1655 there is a more than 10(3) decrease in the efficiency of T2 plaque formation. Protects 100-fold against phage T5, offers no protection against T7. When the operon is introduced in E.coli MG1655 it protects against phages T2, T4, T5 and T6. Another paper shows the operon confers protection against phages P1, T2, T5 and T6 but not T4 or lambda. This Vibrio cholerae serotype O1 (strain ATCC 39315 / El Tor Inaba N16961) protein is Cyclic GMP-AMP synthase.